Here is a 316-residue protein sequence, read N- to C-terminus: HTH-type transcriptional regulator cbl (316 aa).

The region spanning 1–59 (MNFQQLKIIREAARQDYNLTEVANMLFTSQSGVSRHIRELEDELGIEIFVRRGKRLLGM) is the HTH lysR-type domain. The segment at residues 19 to 38 (LTEVANMLFTSQSGVSRHIR) is a DNA-binding region (H-T-H motif).

It belongs to the LysR transcriptional regulatory family.

In terms of biological role, may be an accessory regulatory protein within the cys regulon. The sequence is that of HTH-type transcriptional regulator cbl (cbl) from Escherichia coli (strain K12).